The primary structure comprises 591 residues: Frizzled-9 (591 aa).

Positions 1-22 (MAVAPLRGALLLWQLLAAGGAA) are cleaved as a signal peptide. Residues 23–229 (LEIGRFDPER…EVFWSRRDKD (207 aa)) are Extracellular-facing. Residues 34–155 (RGAAPCQAVE…NDPHALCMEA (122 aa)) enclose the FZ domain. 5 disulfide bridges follow: Cys-39-Cys-100, Cys-47-Cys-93, Cys-84-Cys-122, Cys-111-Cys-152, and Cys-115-Cys-139. Asn-53 is a glycosylation site (N-linked (GlcNAc...) asparagine). A required for Wnt-activated receptor activity region spans residues 58 to 172 (PNLLGHTSQG…PAEPHKGLGM (115 aa)). N-linked (GlcNAc...) asparagine glycosylation is present at Asn-158. The chain crosses the membrane as a helical span at residues 230–250 (FALVWMAVWSALCFFSTAFTV). The Cytoplasmic portion of the chain corresponds to 251–266 (LTFLLEPHRFQYPERP). Residues 267 to 287 (IIFLSMCYNVYSLAFLIRAVA) form a helical membrane-spanning segment. Over 288–315 (GAQSVACDQEAGALYVIQEGLENTGCTL) the chain is Extracellular. The chain crosses the membrane as a helical span at residues 316 to 336 (VFLLLYYFGMASSLWWVVLTL). At 337–355 (TWFLAAGKKWGHEAIEAHG) the chain is on the cytoplasmic side. Residues 356–376 (SYFHMAAWGLPALKTIVILTL) traverse the membrane as a helical segment. The Extracellular segment spans residues 377-400 (RKVAGDELTGLCYVASTDAAALTG). Residues 401 to 421 (FVLVPLSGYLVLGSSFLLTGF) traverse the membrane as a helical segment. At 422–447 (VALFHIRKIMKTGGTNTEKLEKLMVK) the chain is on the cytoplasmic side. A helical transmembrane segment spans residues 448–468 (IGVFSILYTVPATCVIVCYVY). At 469–508 (ERLNMDFWRLRATEQPCAAAAGPGGRRDCSLPGGSVPTVA) the chain is on the extracellular side. Residues 509–529 (VFMLKIFMSLVVGITSGVWVW) form a helical membrane-spanning segment. Residues 530–591 (SSKTFQTWQS…DPSLENPTHL (62 aa)) lie on the Cytoplasmic side of the membrane. Positions 532 to 537 (KTFQTW) match the Lys-Thr-X-X-X-Trp motif, mediates interaction with the PDZ domain of Dvl family members motif. Positions 554 to 591 (ACRAPGSYGRGTHCHYKAPTVVLHMTKTDPSLENPTHL) are required for CTNNB1 accumulation and TCF transcription factor activity.

The protein belongs to the G-protein coupled receptor Fz/Smo family. Post-translationally, ubiquitinated by ZNRF3, leading to its degradation by the proteasome. In terms of tissue distribution, expressed predominantly in adult and fetal brain, testis, eye, skeletal muscle and kidney. Moderately expressed in pancreas, thyroid, adrenal cortex, small intestine and stomach. Detected in fetal liver and kidney. Expressed in neural progenitor cells.

It localises to the cell membrane. In terms of biological role, receptor for WNT2 that is coupled to the beta-catenin canonical signaling pathway, which leads to the activation of disheveled proteins, inhibition of GSK-3 kinase, nuclear accumulation of beta-catenin and activation of Wnt target genes. Plays a role in neuromuscular junction (NMJ) assembly by negatively regulating the clustering of acetylcholine receptors (AChR) through the beta-catenin canonical signaling pathway. May play a role in neural progenitor cells (NPCs) viability through the beta-catenin canonical signaling pathway by negatively regulating cell cycle arrest leading to inhibition of neuron apoptotic process. During hippocampal development, regulates neuroblast proliferation and apoptotic cell death. Controls bone formation through non canonical Wnt signaling mediated via ISG15. Positively regulates bone regeneration through non canonical Wnt signaling. The protein is Frizzled-9 (FZD9) of Homo sapiens (Human).